Here is a 470-residue protein sequence, read N- to C-terminus: Glutamate--tRNA ligase (470 aa).

Residues 12–22 (PSPTGIFHVGG) carry the 'HIGH' region motif. The Zn(2+) site is built by cysteine 103, cysteine 105, cysteine 125, and aspartate 127. Positions 236-240 (KLSKR) match the 'KMSKS' region motif. Lysine 239 serves as a coordination point for ATP.

Belongs to the class-I aminoacyl-tRNA synthetase family. Glutamate--tRNA ligase type 1 subfamily. In terms of assembly, monomer. It depends on Zn(2+) as a cofactor.

The protein localises to the cytoplasm. It catalyses the reaction tRNA(Glu) + L-glutamate + ATP = L-glutamyl-tRNA(Glu) + AMP + diphosphate. Its function is as follows. Catalyzes the attachment of glutamate to tRNA(Glu) in a two-step reaction: glutamate is first activated by ATP to form Glu-AMP and then transferred to the acceptor end of tRNA(Glu). The sequence is that of Glutamate--tRNA ligase from Frankia casuarinae (strain DSM 45818 / CECT 9043 / HFP020203 / CcI3).